The chain runs to 953 residues: Isoleucine--tRNA ligase (953 aa).

The short motif at 61 to 71 is the 'HIGH' region element; the sequence is PYANGALHIGH. Glu564 contacts L-isoleucyl-5'-AMP. Positions 605-609 match the 'KMSKS' region motif; it reads KMSKS. Lys608 is an ATP binding site. 4 residues coordinate Zn(2+): Cys922, Cys925, Cys942, and Cys945.

Belongs to the class-I aminoacyl-tRNA synthetase family. IleS type 1 subfamily. In terms of assembly, monomer. Requires Zn(2+) as cofactor.

The protein resides in the cytoplasm. The catalysed reaction is tRNA(Ile) + L-isoleucine + ATP = L-isoleucyl-tRNA(Ile) + AMP + diphosphate. Functionally, catalyzes the attachment of isoleucine to tRNA(Ile). As IleRS can inadvertently accommodate and process structurally similar amino acids such as valine, to avoid such errors it has two additional distinct tRNA(Ile)-dependent editing activities. One activity is designated as 'pretransfer' editing and involves the hydrolysis of activated Val-AMP. The other activity is designated 'posttransfer' editing and involves deacylation of mischarged Val-tRNA(Ile). In Thermosynechococcus vestitus (strain NIES-2133 / IAM M-273 / BP-1), this protein is Isoleucine--tRNA ligase.